The chain runs to 173 residues: Chromophore lyase CpcS/CpeS 3 (173 aa).

Belongs to the CpcS/CpeS biliprotein lyase family.

Functionally, covalently attaches a chromophore to Cys residue(s) of phycobiliproteins. The protein is Chromophore lyase CpcS/CpeS 3 of Trichodesmium erythraeum (strain IMS101).